The chain runs to 420 residues: ATP phosphoribosyltransferase regulatory subunit (420 aa).

Belongs to the class-II aminoacyl-tRNA synthetase family. HisZ subfamily. As to quaternary structure, heteromultimer composed of HisG and HisZ subunits.

The protein localises to the cytoplasm. Its pathway is amino-acid biosynthesis; L-histidine biosynthesis; L-histidine from 5-phospho-alpha-D-ribose 1-diphosphate: step 1/9. Required for the first step of histidine biosynthesis. May allow the feedback regulation of ATP phosphoribosyltransferase activity by histidine. In Bacillus cereus (strain ATCC 14579 / DSM 31 / CCUG 7414 / JCM 2152 / NBRC 15305 / NCIMB 9373 / NCTC 2599 / NRRL B-3711), this protein is ATP phosphoribosyltransferase regulatory subunit.